We begin with the raw amino-acid sequence, 429 residues long: Adenylosuccinate synthetase (429 aa).

Residues 12 to 18 and 40 to 42 each bind GTP; these read GDEGKGK and GHT. Asp13 functions as the Proton acceptor in the catalytic mechanism. Asp13 and Gly40 together coordinate Mg(2+). Residues 13 to 16, 38 to 41, Thr128, Arg142, Gln223, Thr238, and Arg302 contribute to the IMP site; these read DEGK and NAGH. His41 functions as the Proton donor in the catalytic mechanism. 298-304 is a binding site for substrate; it reads TTTGRAR. GTP is bound by residues Arg304, 330–332, and 412–414; these read SID and SVG.

Belongs to the adenylosuccinate synthetase family. In terms of assembly, homodimer. The cofactor is Mg(2+).

The protein localises to the cytoplasm. The catalysed reaction is IMP + L-aspartate + GTP = N(6)-(1,2-dicarboxyethyl)-AMP + GDP + phosphate + 2 H(+). Its pathway is purine metabolism; AMP biosynthesis via de novo pathway; AMP from IMP: step 1/2. In terms of biological role, plays an important role in the de novo pathway of purine nucleotide biosynthesis. Catalyzes the first committed step in the biosynthesis of AMP from IMP. This is Adenylosuccinate synthetase from Oceanobacillus iheyensis (strain DSM 14371 / CIP 107618 / JCM 11309 / KCTC 3954 / HTE831).